A 506-amino-acid polypeptide reads, in one-letter code: Sodium-coupled neutral amino acid symporter 2 (506 aa).

The segment at 1–23 is disordered; that stretch reads MKKAEMGRFNISPDEDSSSYSSN. The Cytoplasmic segment spans residues 1–76; it reads MKKAEMGRFN…HPGTTSFGMS (76 aa). Residues 1 to 96 form a regulates protein turnover upon amino acid deprivation region; sequence MKKAEMGRFN…SGILGLSYAM (96 aa). 4 positions are modified to phosphoserine: Ser12, Ser21, Ser22, and Ser55. Residues 77–96 traverse the membrane as a helical segment; that stretch reads VFNLSNAIVGSGILGLSYAM. A Na(+)-binding site is contributed by Asn82. The Extracellular segment spans residues 97–102; sequence ANTGIA. Residues 103 to 123 form a helical membrane-spanning segment; it reads LFIILLTFVSIFSLYSVHLLL. At 124 to 158 the chain is on the cytoplasmic side; it reads KTANEGGSLLYEQLGYKAFGLVGKLAASGSITMQN. A helical membrane pass occupies residues 159–177; sequence IGAMSSYLFIVKYELPLVI. The Extracellular segment spans residues 178–188; the sequence is QALTNIEDKTG. A helical membrane pass occupies residues 189 to 209; the sequence is LWYLNGNYLVLLVSLVVILPL. Residues 210-217 lie on the Cytoplasmic side of the membrane; the sequence is SLFRNLGY. The helical transmembrane segment at 218-238 threads the bilayer; the sequence is LGYTSGLSLLCMVFFLIVVIC. The Extracellular segment spans residues 239–292; sequence KKFQVPCPVEAALIINETINTTLTQPTALVPALSHNVTENDSCRPHYFIFNSQT. Cys245 and Cys281 are disulfide-bonded. N-linked (GlcNAc...) asparagine glycans are attached at residues Asn258 and Asn274. The helical transmembrane segment at 293–313 threads the bilayer; it reads VYAVPILIFSFVCHPAVLPIY. Topologically, residues 314–329 are cytoplasmic; that stretch reads EELKDRSRRRMMNVSK. The helical transmembrane segment at 330–350 threads the bilayer; that stretch reads ISFFAMFLMYLLAALFGYLTF. Residues 351–371 lie on the Extracellular side of the membrane; sequence YEHVESELLHTYSSILGTDIL. The helical transmembrane segment at 372–392 threads the bilayer; it reads LLIVRLAVLMAVTLTVPVVIF. Na(+) is bound at residue Thr386. At 393-413 the chain is on the cytoplasmic side; that stretch reads PIRSSVTHLLCASKDFSWWRH. The chain crosses the membrane as a helical span at residues 414 to 434; the sequence is SLITVSILAFTNLLVIFVPTI. Residues 435–436 lie on the Extracellular side of the membrane; that stretch reads RD. The chain crosses the membrane as a helical span at residues 437–457; the sequence is IFGFIGASAASMLIFILPSAF. Over 458-472 the chain is Cytoplasmic; it reads YIKLVKKEPMKSVQK. The chain crosses the membrane as a helical span at residues 473 to 495; the sequence is IGALFFLLSGVLVMTGSMALIVL. Topologically, residues 496–506 are extracellular; the sequence is DWVHNAPGGGH.

It belongs to the amino acid/polyamine transporter 2 family. Polyubiquitination by NEDD4L regulates the degradation and the activity of SLC38A2.

The protein localises to the cell membrane. The catalysed reaction is L-alanine(in) + Na(+)(in) = L-alanine(out) + Na(+)(out). It catalyses the reaction glycine(in) + Na(+)(in) = glycine(out) + Na(+)(out). It carries out the reaction L-serine(in) + Na(+)(in) = L-serine(out) + Na(+)(out). The enzyme catalyses L-proline(in) + Na(+)(in) = L-proline(out) + Na(+)(out). The catalysed reaction is L-methionine(in) + Na(+)(in) = L-methionine(out) + Na(+)(out). It catalyses the reaction L-histidine(in) + Na(+)(in) = L-histidine(out) + Na(+)(out). It carries out the reaction L-asparagine(in) + Na(+)(in) = L-asparagine(out) + Na(+)(out). The enzyme catalyses L-glutamine(in) + Na(+)(in) = L-glutamine(out) + Na(+)(out). The catalysed reaction is L-threonine(in) + Na(+)(in) = L-threonine(out) + Na(+)(out). It catalyses the reaction L-leucine(in) + Na(+)(in) = L-leucine(out) + Na(+)(out). It carries out the reaction L-phenylalanine(in) + Na(+)(in) = L-phenylalanine(out) + Na(+)(out). With respect to regulation, inhibited by N-methyl-D-glucamine. Inhibited by choline. Allosteric regulation of sodium ions binding by pH. Symporter that cotransports neutral amino acids and sodium ions from the extracellular to the intracellular side of the cell membrane. The transport is pH-sensitive, Li(+)-intolerant, electrogenic, driven by the Na(+) electrochemical gradient and cotransports of neutral amino acids and sodium ions with a stoichiometry of 1:1. May function in the transport of amino acids at the blood-brain barrier. May function in the transport of amino acids in the supply of maternal nutrients to the fetus through the placenta. Maintains a key metabolic glutamine/glutamate balance underpinning retrograde signaling by dendritic release of the neurotransmitter glutamate. Transports L-proline in differentiating osteoblasts for the efficient synthesis of proline-enriched proteins and provides proline essential for osteoblast differentiation and bone formation during bone development. The sequence is that of Sodium-coupled neutral amino acid symporter 2 from Pan paniscus (Pygmy chimpanzee).